We begin with the raw amino-acid sequence, 211 residues long: MRIGILGGTFDPIHFGHIRPALEVRDKLNLDRVWLMPNHIPPHKASTCVSTEQRLEMVQLVCDQYDEFDLCDIEAKRDTPSYLVTTLKQLRDEHPNDEFYFIMGMDSLVSLPTWYEWRSIFTLCHIVVSERHGWCLNPDSAIYEEYEHRLTSTNQIPSQSTGLIIPIEIAPQPYSSTEIRHQLFNGIIPENALPSKIIKFIQHNSLYQAPA.

It belongs to the NadD family.

It catalyses the reaction nicotinate beta-D-ribonucleotide + ATP + H(+) = deamido-NAD(+) + diphosphate. It functions in the pathway cofactor biosynthesis; NAD(+) biosynthesis; deamido-NAD(+) from nicotinate D-ribonucleotide: step 1/1. In terms of biological role, catalyzes the reversible adenylation of nicotinate mononucleotide (NaMN) to nicotinic acid adenine dinucleotide (NaAD). In Shewanella sediminis (strain HAW-EB3), this protein is Probable nicotinate-nucleotide adenylyltransferase.